A 234-amino-acid polypeptide reads, in one-letter code: UPF0502 protein BPSS1373 (234 aa).

It belongs to the UPF0502 family.

The polypeptide is UPF0502 protein BPSS1373 (Burkholderia pseudomallei (strain K96243)).